Consider the following 522-residue polypeptide: GMP synthase [glutamine-hydrolyzing] (522 aa).

In terms of domain architecture, Glutamine amidotransferase type-1 spans 9–204 (KILILDFGAQ…VVDICGCQTL (196 aa)). Residue Cys86 is the Nucleophile of the active site. Catalysis depends on residues His178 and Glu180. The region spanning 205 to 397 (WTAANIIEDQ…LGLPHAMVYR (193 aa)) is the GMPS ATP-PPase domain. An ATP-binding site is contributed by 232–238 (SGGVDSS).

In terms of assembly, homodimer.

It catalyses the reaction XMP + L-glutamine + ATP + H2O = GMP + L-glutamate + AMP + diphosphate + 2 H(+). Its pathway is purine metabolism; GMP biosynthesis; GMP from XMP (L-Gln route): step 1/1. In terms of biological role, catalyzes the synthesis of GMP from XMP. This is GMP synthase [glutamine-hydrolyzing] from Xylella fastidiosa (strain M12).